Here is a 288-residue protein sequence, read N- to C-terminus: Protein sprouty homolog 3 (288 aa).

One can recognise an SPR domain in the interval 154–267; it reads KCVPCTAVRP…PGCRCKRHTN (114 aa).

The protein belongs to the sprouty family. Interacts with TESK1. Interacts with USP11. Interacts with CAV1 (via C-terminus). In terms of tissue distribution, expressed in the brain with expression the highest in Purkinje cell bodies and projections in the cerebellum (at protein level). Also expressed in central and peripheral nervous system ganglion cells, superior cervical ganglion and dorsal root ganglion (at protein level). Expressed in the retinal ganglion cell layer and the inner nuclear layer (at protein level).

Its subcellular location is the cytoplasm. Inhibits neurite branching, arbor length and neurite complexity. Inhibits EGF-mediated p42/44 ERK signaling. Negatively regulates the MAPK cascade, resulting in a reduction of extracellular matrix protein accumulation. May function as an antagonist of fibroblast growth factor (FGF) pathways and may negatively modulate respiratory organogenesis. The chain is Protein sprouty homolog 3 from Mus musculus (Mouse).